Reading from the N-terminus, the 164-residue chain is uncharacterized protein (164 aa).

This is an uncharacterized protein from Caenorhabditis elegans.